A 146-amino-acid chain; its full sequence is Probable calcium-binding protein CML40 (146 aa).

Positions 7-42 constitute an EF-hand 1 domain; the sequence is NKRDEYQRVFSCFDKSHQGKVSVSTIERCVDAIKSG. Residues 44-65 form a disordered region; sequence RAVVDQEDTTNPNPEESTDDKS. In terms of domain architecture, EF-hand 2 spans 116-146; that stretch reads KSLKDCEVMISQFDINRDGIINFDEFRAMMQ. 4 residues coordinate Ca(2+): Asp129, Asn131, Asp133, and Glu140.

In terms of biological role, potential calcium sensor. This Arabidopsis thaliana (Mouse-ear cress) protein is Probable calcium-binding protein CML40 (CML40).